Reading from the N-terminus, the 93-residue chain is UPF0358 protein BLi01701/BL02974 (93 aa).

It belongs to the UPF0358 family.

The protein is UPF0358 protein BLi01701/BL02974 of Bacillus licheniformis (strain ATCC 14580 / DSM 13 / JCM 2505 / CCUG 7422 / NBRC 12200 / NCIMB 9375 / NCTC 10341 / NRRL NRS-1264 / Gibson 46).